The following is a 2344-amino-acid chain: Genome polyprotein (2344 aa).

Residues glutamine 492 to serine 653 form the SF3 helicase domain. Glycine 522–threonine 529 contacts ATP. Tyrosine 1014 is subject to O-(5'-phospho-RNA)-tyrosine. Tyrosine 1014 carries the post-translational modification O-UMP-tyrosine; transient. Positions glycine 1109–threonine 1244 constitute a Peptidase C24 domain. Residues histidine 1135, aspartate 1152, and cysteine 1212 each act as for 3CLpro activity in the active site. The RdRp catalytic domain occupies serine 1495 to leucine 1619. A disulfide bond links cysteine 1584 and cysteine 1591. The interval arginine 1771–glycine 1794 is disordered. Residues alanine 1778–glycine 1794 show a composition bias toward low complexity.

In terms of assembly, homodimer. Homomultimer. Interacts with host type II histo-blood group structures antigens at the surface of target cells. The cofactor is Mn(2+). Specific enzymatic cleavages by its own cysteine protease yield mature proteins. The protease cleaves itself from the nascent polyprotein autocatalytically. Precursor p41 can be cleaved by viral 3CLpro into protein p19 and VPg, or cleaved by host protease into protein p23/2 and protein p18. Post-translationally, VPg is uridylylated by the polymerase and is covalently attached to the 5'-end of the polyadenylated genomic and subgenomic RNAs. This uridylylated form acts as a nucleotide-peptide primer for the polymerase.

The protein localises to the host cytoplasm. It localises to the host endoplasmic reticulum. It is found in the virion. The enzyme catalyses a ribonucleoside 5'-triphosphate + H2O = a ribonucleoside 5'-diphosphate + phosphate + H(+). It catalyses the reaction Endopeptidase with a preference for cleavage when the P1 position is occupied by Glu-|-Xaa and the P1' position is occupied by Gly-|-Yaa.. It carries out the reaction RNA(n) + a ribonucleoside 5'-triphosphate = RNA(n+1) + diphosphate. In terms of biological role, together with NTPase and NS4, initiates the formation of the replication complex. Induces the proliferation of the host smooth ER membranes forming long tubular structures. These remodeled membranes probably form the viral factories that contain the replication complex. Its function is as follows. Displays NTPase activity, but no helicase activity. Induces the formation of convoluted membranes derived from the host ER. These remodeled membranes probably form the viral factories that contain the replication complex. Together with NS2 and NS4, initiates the formation of the replication complex. Probable key protein responsible for the formation of membrane alterations by the virus. Induces the formation of convoluted membranes derived from the host ER. These remodeled membranes probably form the viral factories that contain the replication complex. Together with NS2 and NTPase, initiates the formation of the replication complex. Functionally, viral genome-linked protein is covalently linked to the 5'-end of the positive-strand, negative-strand genomic RNAs and subgenomic RNA. Acts as a genome-linked replication primer. May recruit ribosome to viral RNA thereby promoting viral proteins translation. Interacts with host translation initiation complex to allow the translation of viral proteins. In terms of biological role, processes the polyprotein. 3CLpro-RdRp is first released by autocleavage, then all other proteins are cleaved. May cleave polyadenylate-binding protein thereby inhibiting cellular translation. Its function is as follows. Replicates genomic and antigenomic RNA by recognizing replications specific signals. Also transcribes a subgenomic mRNA by initiating RNA synthesis internally on antigenomic RNA. This sgRNA codes for structural proteins. Catalyzes the covalent attachment VPg with viral RNAs. Capsid protein VP60 self assembles to form an icosahedral capsid with a T=3 symmetry, about 35 nm in diameter, and consisting of 180 capsid proteins. A smaller form of capsid with a diameter of 23 nm might be capsid proteins assembled as icosahedron with T=1 symmetry. The capsid encapsulate VP2 proteins and genomic or subgenomic RNA. Attaches virion to target cells by binding histo-blood group antigens, inducing endocytosis of the viral particle. Acidification of the endosome induces conformational change of capsid protein thereby injecting virus genomic RNA into host cytoplasm. In Oryctolagus cuniculus (Rabbit), this protein is Genome polyprotein.